The chain runs to 185 residues: UPF0149 protein PD_0802 (185 aa).

The protein belongs to the UPF0149 family.

The sequence is that of UPF0149 protein PD_0802 from Xylella fastidiosa (strain Temecula1 / ATCC 700964).